A 296-amino-acid polypeptide reads, in one-letter code: Urease accessory protein UreD (296 aa).

Belongs to the UreD family. In terms of assembly, ureD, UreF and UreG form a complex that acts as a GTP-hydrolysis-dependent molecular chaperone, activating the urease apoprotein by helping to assemble the nickel containing metallocenter of UreC. The UreE protein probably delivers the nickel.

The protein localises to the cytoplasm. Required for maturation of urease via the functional incorporation of the urease nickel metallocenter. The polypeptide is Urease accessory protein UreD (Janthinobacterium sp. (strain Marseille) (Minibacterium massiliensis)).